The sequence spans 331 residues: UPF0324 membrane protein SA0329 (331 aa).

A run of 11 helical transmembrane segments spans residues 9 to 26 (FMIGLSLTFIVALFSFLA), 31 to 48 (ILDKVGALTIAILIAILY), 69 to 88 (LLRFAIILYGLKLNIFDIIG), 93 to 115 (LLAIDVGVVIFSIVMMLFVNKLL), 122 to 144 (ALLLGVGTGVCGAAAIAAVAPIF), 154 to 176 (SIGIIALIGTIFSLIYTAIYAIF), 183 to 202 (YGAWSGVSLHEIAHVVLAGG), 217 to 234 (LGRVFLLIPLTIVLILIM), 247 to 269 (ISIPYFLIGFVIMALVNTYVTIP), 273 to 295 (LNILNTISTICLLMAMVALGLNV), and 308 to 330 (LMTIIITSICLSSLAFIVVHWLY).

The protein belongs to the UPF0324 family.

The protein localises to the cell membrane. The polypeptide is UPF0324 membrane protein SA0329 (Staphylococcus aureus (strain N315)).